Consider the following 478-residue polypeptide: Argininosuccinate lyase (478 aa).

This sequence belongs to the lyase 1 family. Argininosuccinate lyase subfamily.

The protein resides in the cytoplasm. The enzyme catalyses 2-(N(omega)-L-arginino)succinate = fumarate + L-arginine. It functions in the pathway amino-acid biosynthesis; L-arginine biosynthesis; L-arginine from L-ornithine and carbamoyl phosphate: step 3/3. This Rhodospirillum rubrum (strain ATCC 11170 / ATH 1.1.1 / DSM 467 / LMG 4362 / NCIMB 8255 / S1) protein is Argininosuccinate lyase.